The chain runs to 131 residues: MSGGKSGGKAAVAKSAQSRSAKAGLAFPVGRVHRLLRKGNYAQRVGAGAPVYLAAVLEYLAAEILELAGNAARDNKKTRIIPRHLQLAIRNDEELNKLLGHVTIAQGGVVPNINAHLLPKQSGKGKPSQEL.

N-acetylserine is present on serine 2. 2 positions are modified to N6-acetyllysine: lysine 5 and lysine 9. Position 106 is an N5-methylglutamine (glutamine 106). Phosphoserine is present on serine 128. Residues 128–129 (SQ) carry the [ST]-Q motif motif.

Belongs to the histone H2A family. The nucleosome is a histone octamer containing two molecules each of H2A, H2B, H3 and H4 assembled in one H3-H4 heterotetramer and two H2A-H2B heterodimers. The octamer wraps approximately 147 bp of DNA. Phosphorylated to form H2AS128ph (gamma-H2A) in response to DNA double-strand breaks (DSBs) generated by exogenous genotoxic agents and by stalled replication forks. Phosphorylation is dependent on the DNA damage checkpoint kinases rad3/ATR and tel1/ATM, spreads on either side of a detected DSB site and may mark the surrounding chromatin for recruitment of proteins required for DNA damage signaling and repair. Gamma-H2A is required for recruiting crb2, a modulator of DNA damage checkpoint signaling, to DSB sites. Gamma-H2A is removed from the DNA prior to the strand invasion-primer extension step of the repair process and subsequently dephosphorylated. Dephosphorylation is necessary for efficient recovery from the DNA damage checkpoint. Post-translationally, acetylated by esa1 to form H2AK4ac and H2AK7ac.

It localises to the nucleus. The protein localises to the chromosome. Its function is as follows. Core component of nucleosome which plays a central role in DNA double strand break (DSB) repair. Nucleosomes wrap and compact DNA into chromatin, limiting DNA accessibility to the cellular machineries which require DNA as a template. Histones thereby play a central role in transcription regulation, DNA repair, DNA replication and chromosomal stability. DNA accessibility is regulated via a complex set of post-translational modifications of histones, also called histone code, and nucleosome remodeling. The chain is Histone H2A-beta (hta2) from Schizosaccharomyces pombe (strain 972 / ATCC 24843) (Fission yeast).